Here is a 429-residue protein sequence, read N- to C-terminus: 3-phosphoshikimate 1-carboxyvinyltransferase (429 aa).

Positions 20, 21, and 25 each coordinate 3-phosphoshikimate. Lys20 provides a ligand contact to phosphoenolpyruvate. Residues Gly89 and Arg118 each coordinate phosphoenolpyruvate. 3-phosphoshikimate contacts are provided by Ser164, Ser165, Gln166, Ser192, Asp311, and Lys338. A phosphoenolpyruvate-binding site is contributed by Gln166. Asp311 serves as the catalytic Proton acceptor. Residues Arg342 and Arg384 each coordinate phosphoenolpyruvate.

Belongs to the EPSP synthase family. In terms of assembly, monomer.

It is found in the cytoplasm. It catalyses the reaction 3-phosphoshikimate + phosphoenolpyruvate = 5-O-(1-carboxyvinyl)-3-phosphoshikimate + phosphate. It participates in metabolic intermediate biosynthesis; chorismate biosynthesis. Its function is as follows. Catalyzes the transfer of the enolpyruvyl moiety of phosphoenolpyruvate (PEP) to the 5-hydroxyl of shikimate-3-phosphate (S3P) to produce enolpyruvyl shikimate-3-phosphate and inorganic phosphate. The chain is 3-phosphoshikimate 1-carboxyvinyltransferase from Methanococcus maripaludis (strain C7 / ATCC BAA-1331).